Consider the following 133-residue polypeptide: Ribosome-binding factor A (133 aa).

It belongs to the RbfA family. In terms of assembly, monomer. Binds 30S ribosomal subunits, but not 50S ribosomal subunits or 70S ribosomes.

Its subcellular location is the cytoplasm. In terms of biological role, one of several proteins that assist in the late maturation steps of the functional core of the 30S ribosomal subunit. Associates with free 30S ribosomal subunits (but not with 30S subunits that are part of 70S ribosomes or polysomes). Required for efficient processing of 16S rRNA. May interact with the 5'-terminal helix region of 16S rRNA. The polypeptide is Ribosome-binding factor A (Acinetobacter baumannii (strain ACICU)).